The primary structure comprises 168 residues: Photosystem I assembly protein Ycf3 (168 aa).

TPR repeat units follow at residues 35 to 68 (AFTY…EIDP), 72 to 105 (SYIL…NPFL), and 120 to 153 (GEQA…TPGN).

This sequence belongs to the Ycf3 family.

The protein localises to the plastid. It localises to the chloroplast thylakoid membrane. Essential for the assembly of the photosystem I (PSI) complex. May act as a chaperone-like factor to guide the assembly of the PSI subunits. The protein is Photosystem I assembly protein Ycf3 of Nandina domestica (Heavenly bamboo).